Reading from the N-terminus, the 575-residue chain is V-type ATP synthase alpha chain (575 aa).

Residue 238–245 (GPFGAGKT) participates in ATP binding.

Belongs to the ATPase alpha/beta chains family.

It catalyses the reaction ATP + H2O + 4 H(+)(in) = ADP + phosphate + 5 H(+)(out). In terms of biological role, produces ATP from ADP in the presence of a proton gradient across the membrane. The V-type alpha chain is a catalytic subunit. The polypeptide is V-type ATP synthase alpha chain (atpA) (Borreliella burgdorferi (strain ATCC 35210 / DSM 4680 / CIP 102532 / B31) (Borrelia burgdorferi)).